The chain runs to 206 residues: Putative apoptosis inhibitor 021L (206 aa).

The segment covering 95 to 105 (TSKSPVSNQPS) has biased composition (polar residues). The disordered stretch occupies residues 95-114 (TSKSPVSNQPSPEEDEPIPD). An RING-type zinc finger spans residues 157–195 (CVVCQANVRNVVFVPCNHLATCISCSANPLMPKKCPMCR).

It belongs to the IIV-6 193R family.

In terms of biological role, plays a role early in infection by preventing host cell apoptosis. This is Putative apoptosis inhibitor 021L from Aedes vexans (Inland floodwater mosquito).